The primary structure comprises 1315 residues: Claspin (1315 aa).

2 disordered regions span residues 22–276 (EAAD…AARL) and 345–474 (PADA…EQKT). 6 positions are modified to phosphoserine: serine 26, serine 42, serine 46, serine 53, serine 65, and serine 67. The segment covering 65 to 74 (SDSEAEDRDD) has biased composition (acidic residues). Polar residues predominate over residues 91–101 (NLHSGKSQSRS). The span at 108 to 118 (DSDESDMEETP) shows a compositional bias: acidic residues. Residues serine 109, serine 112, and serine 119 each carry the phosphoserine modification. Residues 119-128 (SQESPETQEA) show a composition bias toward polar residues. Basic and acidic residues-rich tracts occupy residues 153–178 (LLRE…MEKI) and 186–197 (TRCEESDADRPL). The stretch at 159-187 (EGKAKSKRRLEKEERTMEKIRRLKKKETR) forms a coiled coil. Residues 205–228 (EDSDLFETGLEEENDSALEDEESL) are compositionally biased toward acidic residues. A Phosphoserine modification is found at serine 220. Positions 235–245 (VKNKVKNRKKK) are enriched in basic residues. Serine 255 bears the Phosphoserine mark. Composition is skewed to basic and acidic residues over residues 391 to 415 (ACGK…DDRP) and 455 to 470 (EELK…EGMP). Serine 522 carries the phosphoserine modification. A coiled-coil region spans residues 599 to 626 (EKLQMLKAKLQEAMKLRRLEERQKRQAL). Residues 625–691 (ALFKLDNEDG…SSDIGKSVAL (67 aa)) are disordered. Over residues 632 to 657 (EDGFEEEEEEEEMTDESEEDGEEETT) the composition is skewed to acidic residues. Over residues 669 to 679 (KDEKETDKENT) the composition is skewed to basic and acidic residues. A phosphoserine mark is found at serine 698, serine 701, serine 709, serine 722, and serine 740. The disordered stretch occupies residues 713–750 (MGYFPTEEKSETDEYLAKQSDKLDEDDSSSLLTKESSH). Positions 741-750 (SSLLTKESSH) are enriched in low complexity. A phosphoserine mark is found at serine 785, serine 787, serine 810, serine 816, and serine 823. At lysine 868 the chain carries N6-acetyllysine. 2 CKB motif repeats span residues 887–896 (ELLDLCTGQF) and 917–926 (ELLNLCSGKF). Position 893 is a phosphothreonine; by CHEK1 (threonine 893). Disordered regions lie at residues 924–1002 (GKFP…NDEE) and 1032–1052 (EDEA…DGEE). Serine 932 carries the phosphoserine modification. A CKB motif 3 repeat occupies 954 to 963 (EALALCSGSF). Positions 966-1063 (DREEEGEEEE…DEYEEDVIDE (98 aa)) are acidic patch. 3 stretches are compositionally biased toward acidic residues: residues 967–977 (REEEGEEEEFG), 990–1002 (SDED…NDEE), and 1043–1052 (GSEDEYDGEE). A phosphoserine mark is found at serine 990, serine 996, and serine 998. The stretch at 1001–1036 (EELALDLEDDEEELLKQSEKMKRQMRLKKYLEDEAE) forms a coiled coil. A phosphoserine mark is found at serine 1133 and serine 1265. The segment at 1264 to 1315 (LSPTKAEAAKDSSKPQVRRRGLSSMMSPSPKRLKTNGSSPGPKRSIFRYLES) is disordered.

It belongs to the claspin family. As to quaternary structure, interacts (phosphorylation-dependent) with CHEK1; regulates CLSPN function in checkpoint for DNA damage and replication. Interacts with ATR and RAD9A and these interactions are slightly reduced during checkpoint activation. Interacts with BRCA1 and this interaction increases during checkpoint activation. Interacts with TIMELESS; the interaction is required for leading-strand replication. Associates with the MCM2-7 complex and other replisome factors. Interacts (via the acidic patch) with CDC7; the interaction is required for phosphorylation of MCM proteins and CLASPIN by CDC7. Interacts with PCNA. Interacts with FZR1. Post-translationally, phosphorylated. Undergoes ATR-dependent phosphorylation by CHEK1 during activation of DNA replication or damage checkpoints. Phosphorylation by CSNK1G1/CK1 promotes CHEK1 binding. Phosphorylated by CDC7 during DNA replication, phosphorylation inhibits interaction between the acidic patch and N-terminal segments leading to increased binding to DNA and PCNA. In terms of processing, ubiquitinated by the anaphase promoting complex/cyclosome (APC/C) during G1 phase, leading to its degradation by the proteasome. Ubiquitination is mediated via its interaction with FZR1/CDH1. Following DNA damage, it is deubiquitinated by USP28 in G2 phase, preventing its degradation. Proteolytically cleaved by caspase-7 (CASP7) in response to apoptosis, leading to its inactivation.

The protein resides in the nucleus. Required for checkpoint mediated cell cycle arrest in response to inhibition of DNA replication or to DNA damage induced by both ionizing and UV irradiation. Adapter protein which binds to BRCA1 and the checkpoint kinase CHEK1 and facilitates the ATR-dependent phosphorylation of both proteins. Also required to maintain normal rates of replication fork progression during unperturbed DNA replication. Binds directly to DNA, with particular affinity for branched or forked molecules and interacts with multiple protein components of the replisome such as the MCM2-7 complex and TIMELESS. Important for initiation of DNA replication, recruits kinase CDC7 to phosphorylate MCM2-7 components. This is Claspin (Clspn) from Mus musculus (Mouse).